We begin with the raw amino-acid sequence, 801 residues long: Phosphorus acquisition-controlling protein (801 aa).

Disordered regions lie at residues 292 to 317, 366 to 607, 628 to 725, and 756 to 801; these read GSSP…DLAR, APSQ…SAGA, NTVP…ASTV, and MKMQ…AMDE. Residues 374 to 386 show a composition bias toward low complexity; it reads PLTPLIPTSSSST. Composition is skewed to polar residues over residues 387–401 and 459–472; these read AGVT…SPEN and KLSS…SVVG. The tract at residues 446 to 540 is interaction with negative regulatory factor; it reads PGIASPATPA…PPSPAVAKPL (95 aa). Positions 477–486 are enriched in basic and acidic residues; that stretch reads DPMDPDHIEN. A compositionally biased stretch (low complexity) spans 535–554; the sequence is AVAKPLALPSAALSSPQLKP. The span at 637–646 shows a compositional bias: polar residues; it reads SELSTNLTSK. Residues 645–735 form the bHLH domain; the sequence is SKRTSHKIAE…EMAIEYIKQL (91 aa). Residues 676–687 show a composition bias toward basic and acidic residues; it reads PAKEGGDGDGDG. Over residues 690–699 the composition is skewed to gly residues; sequence SSGGGGGSGG. A compositionally biased stretch (basic and acidic residues) spans 700–713; that stretch reads ADREDKREKDKDKA. Residues 765-777 show a composition bias toward low complexity; sequence GSGSSVGDAGDLG.

In terms of assembly, binds DNA as a dimer.

Its subcellular location is the nucleus. Factor that activates the transcription of structural genes for phosphorus acquisition. In Neurospora crassa (strain ATCC 24698 / 74-OR23-1A / CBS 708.71 / DSM 1257 / FGSC 987), this protein is Phosphorus acquisition-controlling protein (nuc-1).